An 86-amino-acid chain; its full sequence is Large ribosomal subunit protein bL27 (86 aa).

Positions 1–26 are disordered; the sequence is MATKKAGGSSRNGRDSAGRRLGVKKS.

Belongs to the bacterial ribosomal protein bL27 family.

The chain is Large ribosomal subunit protein bL27 from Rickettsia akari (strain Hartford).